The sequence spans 471 residues: Tumor necrosis factor receptor superfamily member 1A (471 aa).

Positions 1-29 are cleaved as a signal peptide; the sequence is MGLPTVPGLLLPLVLPALLADVYPAGVQG. Residues 30–210 lie on the Extracellular side of the membrane; sequence LVPHPGDLEK…GKDSQDPGTT (181 aa). TNFR-Cys repeat units follow at residues 43–82, 83–125, 126–166, and 167–195; these read PCPQ…TDCR, VCAP…DTVC, GCRK…DTIC, and HCHM…KLCP. Intrachain disulfides connect C44–C58, C59–C72, C62–C81, C84–C99, C102–C117, C105–C125, and C127–C143. N54 carries an N-linked (GlcNAc...) asparagine glycan. N145 and N151 each carry an N-linked (GlcNAc...) asparagine glycan. 5 disulfide bridges follow: C146/C158, C149/C166, C168/C179, C182/C194, and C185/C190. The chain crosses the membrane as a helical span at residues 211–233; the sequence is VLLPLVIVFGLCLASFASVVLAC. The Cytoplasmic segment spans residues 234 to 471; it reads RYQRWKPKLY…RLASEPRLLW (238 aa). An N-SMase activation domain (NSD) region spans residues 340–360; the sequence is TPGPPASTHLCTPVQKWEASA. Positions 372–457 constitute a Death domain; sequence PATLYAVVDG…GCLENIEEAL (86 aa).

In terms of assembly, binding of TNF to the extracellular domain leads to homotrimerization. The aggregated death domains provide a novel molecular interface that interacts specifically with the death domain of TRADD. Various TRADD-interacting proteins such as TRAFS, RIPK1 and possibly FADD, are recruited to the complex by their association with TRADD. This complex activates at least two distinct signaling cascades, apoptosis and NF-kappa-B signaling. Interacts with BAG4, BABAM2, FEM1B, GRB2, SQSTM1 and TRPC4AP. Interacts directly with NOL3 (via CARD domain); inhibits TNF-signaling pathway. Interacts with SH3RF2, TRADD and RIPK1. SH3RF2 facilitates the recruitment of RIPK1 and TRADD to TNFRSF1A in a TNF-alpha-dependent process. Interacts with PGLYRP1; this interaction is important for cell death induction. Interacts (via death domain) with MADD (via death domain).

The protein resides in the cell membrane. It is found in the golgi apparatus membrane. Receptor for TNFSF2/TNF-alpha and homotrimeric TNFSF1/lymphotoxin-alpha. The adapter molecule FADD recruits caspase-8 to the activated receptor. The resulting death-inducing signaling complex (DISC) performs caspase-8 proteolytic activation which initiates the subsequent cascade of caspases (aspartate-specific cysteine proteases) mediating apoptosis. This chain is Tumor necrosis factor receptor superfamily member 1A (TNFRSF1A), found in Bos taurus (Bovine).